The chain runs to 1153 residues: uncharacterized protein (1153 aa).

An N-terminal signal peptide occupies residues 1-18; that stretch reads MNKNIFITLLISLLLLSG. The N-palmitoyl cysteine moiety is linked to residue Cys19. Residue Cys19 is the site of S-diacylglycerol cysteine attachment. Transmembrane regions (helical) follow at residues 289-309, 393-413, 422-442, and 457-477; these read VSAI…IGNI, LGFI…FLIF, ALIT…FMLF, and ISYA…SMII.

It belongs to the TrbL/VirB6 family.

The protein resides in the cell membrane. This is an uncharacterized protein from Rickettsia conorii (strain ATCC VR-613 / Malish 7).